Reading from the N-terminus, the 396-residue chain is UPF0046 protein T07D4.2 (396 aa).

The tract at residues 73–94 is disordered; the sequence is SRRGSIASGIPMDKKTRRKLSN.

The protein belongs to the UPF0046 family.

The polypeptide is UPF0046 protein T07D4.2 (Caenorhabditis elegans).